We begin with the raw amino-acid sequence, 541 residues long: Sorting nexin-27 (541 aa).

The interval 1–26 is disordered; sequence MADEDGEGIHPAAPHRNGGGGGGGGS. Gly residues predominate over residues 17 to 26; that stretch reads NGGGGGGGGS. One can recognise a PDZ domain in the interval 43–136; the sequence is VVRIVKSESG…ELILTVLSVP (94 aa). Ser51 and Ser62 each carry phosphoserine. The region spanning 161–269 is the PX domain; sequence QAVPISVPTY…EFLSESDENY (109 aa). One can recognise a Ras-associating domain in the interval 273 to 362; the sequence is SDVELRVALP…TCLTIRKWLF (90 aa). Residues 273-362 form an FERM-like region F1 region; the sequence is SDVELRVALP…TCLTIRKWLF (90 aa). The interval 373–421 is FERM-like region F2; that stretch reads NDLAVTYFFHQAVDDVKKGYIKAEEKSYQLQKLYEQRKMVMYLNMLRTC. The segment at 425 to 525 is FERM-like region F3; the sequence is NEIIFPHCAC…RVFCELKWRK (101 aa).

In terms of assembly, core component of the SNX27-retromer, a multiprotein complex composed of SNX27, the WASH complex and the retromer complex. Interacts (via PDZ domain) with a number of target transmembrane proteins (via PDZ-binding motif): ABCC4, ADRB2, ARHGEF7, GRIA1, GRIA2, GRIN1, GRIN2A GRIN2C, KCNJ6, KCNJ9 and SLC2A1/GLUT1. Interacts (via the FERM-like regions) with the WASH complex. Interacts with SNX1. Interacts with CYTIP. Interacts with DGKZ. Interacts with MCC. Interacts (via PDZ domains) with SLC9A3; directs SLC9A3 membrane insertion from early endosomes to the plasma membrane.

It localises to the early endosome membrane. The protein localises to the cytoplasm. Its subcellular location is the cytosol. Involved in the retrograde transport from endosome to plasma membrane, a trafficking pathway that promotes the recycling of internalized transmembrane proteins. Following internalization, endocytosed transmembrane proteins are delivered to early endosomes and recycled to the plasma membrane instead of being degraded in lysosomes. SNX27 specifically binds and directs sorting of a subset of transmembrane proteins containing a PDZ-binding motif at the C-terminus: following interaction with target transmembrane proteins, associates with the retromer complex, preventing entry into the lysosomal pathway, and promotes retromer-tubule based plasma membrane recycling. SNX27 also binds with the WASH complex. Interacts with membranes containing phosphatidylinositol-3-phosphate (PtdIns(3P)). May participate in establishment of natural killer cell polarity. Recruits CYTIP to early endosomes. This chain is Sorting nexin-27 (SNX27), found in Bos taurus (Bovine).